The following is a 503-amino-acid chain: Activin receptor type-1-like (503 aa).

Residues 1-21 (MTLGSPRRGLLMLLMALVTQG) form the signal peptide. At 22 to 118 (DPVKPSRGPL…PSEQPGTDGQ (97 aa)) the chain is on the extracellular side. 3 cysteine pairs are disulfide-bonded: C34–C51, C36–C41, and C46–C69. The segment at 73–76 (HREL) is mediates specificity for BMP ligand. 2 disulfides stabilise this stretch: C77–C89 and C90–C95. N-linked (GlcNAc...) asparagine glycosylation occurs at N98. Residues 119–141 (LALILGPVLALLALVALGVLGLW) traverse the membrane as a helical segment. Over 142–503 (HVRRRQEKQR…NSPEKPKVIQ (362 aa)) the chain is Cytoplasmic. Phosphoserine occurs at positions 155, 160, and 161. The 30-residue stretch at 172 to 201 (SMLGDLLDSDCTTGSGSGLPFLVQRTVARQ) folds into the GS domain. The Protein kinase domain maps to 202–492 (VALVECVGKG…LRIKKTLQKI (291 aa)). ATP is bound by residues 208–216 (VGKGRYGEV) and K229. The active-site Proton acceptor is the D330.

It belongs to the protein kinase superfamily. TKL Ser/Thr protein kinase family. TGFB receptor subfamily. In terms of assembly, interacts with TSC22D1/TSC-22. Mg(2+) is required as a cofactor. Requires Mn(2+) as cofactor.

It is found in the cell membrane. It carries out the reaction L-threonyl-[receptor-protein] + ATP = O-phospho-L-threonyl-[receptor-protein] + ADP + H(+). It catalyses the reaction L-seryl-[receptor-protein] + ATP = O-phospho-L-seryl-[receptor-protein] + ADP + H(+). Type I receptor for TGF-beta family ligands BMP9/GDF2 and BMP10 and important regulator of normal blood vessel development. On ligand binding, forms a receptor complex consisting of two type II and two type I transmembrane serine/threonine kinases. Type II receptors phosphorylate and activate type I receptors which autophosphorylate, then bind and activate SMAD transcriptional regulators. May bind activin as well. The sequence is that of Activin receptor type-1-like (ACVRL1) from Pongo abelii (Sumatran orangutan).